The sequence spans 306 residues: Cilia- and flagella-associated protein 73 (306 aa).

2 coiled-coil regions span residues 49-139 (LQAQ…QRLE) and 197-231 (QSEKQDEMLNLNQQRTQLVEQLEAAREHRQQWESK).

The protein belongs to the CFAP73 family.

It is found in the cytoplasm. It localises to the cytoskeleton. The protein localises to the cilium axoneme. Functionally, may play a role in ciliary/flagellar motility by regulating the assembly and the activity of axonemal inner dynein arm. This is Cilia- and flagella-associated protein 73 from Mus musculus (Mouse).